The sequence spans 385 residues: SWI/SNF-related matrix-associated actin-dependent regulator of chromatin subfamily B member 1 (385 aa).

Residues 1–113 (MMMMALSKTF…DEKYKAVSIS (113 aa)) form a DNA-binding region. Residues Lys-106, Lys-108, and Lys-124 each participate in a glycyl lysine isopeptide (Lys-Gly) (interchain with G-Cter in SUMO2) cross-link. Position 129 is a phosphoserine (Ser-129). Lys-161 participates in a covalent cross-link: Glycyl lysine isopeptide (Lys-Gly) (interchain with G-Cter in SUMO2). An HIV-1 integrase-binding region spans residues 183-243 (PEVLVPIRLD…VPAIASAIRQ (61 aa)). A run of 2 repeats spans residues 186–245 (LVPI…RQQI) and 259–319 (DQRV…RGQL). The MYC-binding stretch occupies residues 186-245 (LVPIRLDMEIDGQKLRDAFTWNMNEKLMTPEMFSEILCDDLDLNPLTFVPAIASAIRQQI). Residues 186 to 319 (LVPIRLDMEI…TIAYSIRGQL (134 aa)) are 2 X approximate tandem repeats. Residues 304–318 (GGEFVTTIAYSIRGQ) form an interaction with PPP1R15A region.

The protein belongs to the SNF5 family. Component of the multiprotein chromatin-remodeling complexes SWI/SNF: SWI/SNF-A (BAF), SWI/SNF-B (PBAF) and related complexes. The canonical complex contains a catalytic subunit (either SMARCA4/BRG1/BAF190A or SMARCA2/BRM/BAF190B) and at least SMARCE1, ACTL6A/BAF53, SMARCC1/BAF155, SMARCC2/BAF170, and SMARCB1/SNF5/BAF47. Other subunits specific to each of the complexes may also be present permitting several possible combinations developmentally and tissue specific. Component of the BAF complex, which includes at least actin (ACTB), ARID1A/BAF250A, ARID1B/BAF250B, SMARCA2/BRM, SMARCA4/BRG1/BAF190A, ACTL6A/BAF53, ACTL6B/BAF53B, SMARCE1/BAF57 SMARCC1/BAF155, SMARCC2/BAF170, SMARCB1/SNF5/INI1, and one or more SMARCD1/BAF60A, SMARCD2/BAF60B, or SMARCD3/BAF60C. In muscle cells, the BAF complex also contains DPF3. Component of neural progenitors-specific chromatin remodeling complex (npBAF complex) composed of at least, ARID1A/BAF250A or ARID1B/BAF250B, SMARCD1/BAF60A, SMARCD3/BAF60C, SMARCA2/BRM/BAF190B, SMARCA4/BRG1/BAF190A, SMARCB1/BAF47, SMARCC1/BAF155, SMARCE1/BAF57, SMARCC2/BAF170, PHF10/BAF45A, ACTL6A/BAF53A and actin. Component of neuron-specific chromatin remodeling complex (nBAF complex) composed of at least, ARID1A/BAF250A or ARID1B/BAF250B, SMARCD1/BAF60A, SMARCD3/BAF60C, SMARCA2/BRM/BAF190B, SMARCA4/BRG1/BAF190A, SMARCB1/BAF47, SMARCC1/BAF155, SMARCE1/BAF57, SMARCC2/BAF170, DPF1/BAF45B, DPF3/BAF45C, ACTL6B/BAF53B and actin. Component of the SWI/SNF-B (PBAF) chromatin remodeling complex, at least composed of SMARCA4/BRG1, SMARCB1/BAF47/SNF5, ACTL6A/BAF53A or ACTL6B/BAF53B, SMARCE1/BAF57, SMARCD1/BAF60A, SMARCD2/BAF60B, perhaps SMARCD3/BAF60C, SMARCC1/BAF155, SMARCC2/BAF170, PBRM1/BAF180, ARID2/BAF200 and actin. Binds to double-stranded DNA. Interacts with CEBPB (when not methylated). Interacts with PIH1D1. Interacts with MYK and MAEL. Interacts with PPP1R15A. Interacts with DPF2. Interacts with YWHAZ. Interacts with ERCC6. Interacts with FOS, FOSB isoform 1 and 2, FOSL1 and FOSL2. As to quaternary structure, (Microbial infection) Binds tightly to the human immunodeficiency virus-type 1 (HIV-1) integrase in vitro and stimulates its DNA-joining activity. Interacts with human papillomavirus 18 E1 protein to stimulate its viral replication. Interacts with Epstein-Barr virus protein EBNA-2.

The protein resides in the nucleus. In terms of biological role, core component of the BAF (hSWI/SNF) complex. This ATP-dependent chromatin-remodeling complex plays important roles in cell proliferation and differentiation, in cellular antiviral activities and inhibition of tumor formation. The BAF complex is able to create a stable, altered form of chromatin that constrains fewer negative supercoils than normal. This change in supercoiling would be due to the conversion of up to one-half of the nucleosomes on polynucleosomal arrays into asymmetric structures, termed altosomes, each composed of 2 histones octamers. Stimulates in vitro the remodeling activity of SMARCA4/BRG1/BAF190A. Involved in activation of CSF1 promoter. Belongs to the neural progenitors-specific chromatin remodeling complex (npBAF complex) and the neuron-specific chromatin remodeling complex (nBAF complex). During neural development a switch from a stem/progenitor to a postmitotic chromatin remodeling mechanism occurs as neurons exit the cell cycle and become committed to their adult state. The transition from proliferating neural stem/progenitor cells to postmitotic neurons requires a switch in subunit composition of the npBAF and nBAF complexes. As neural progenitors exit mitosis and differentiate into neurons, npBAF complexes which contain ACTL6A/BAF53A and PHF10/BAF45A, are exchanged for homologous alternative ACTL6B/BAF53B and DPF1/BAF45B or DPF3/BAF45C subunits in neuron-specific complexes (nBAF). The npBAF complex is essential for the self-renewal/proliferative capacity of the multipotent neural stem cells. The nBAF complex along with CREST plays a role regulating the activity of genes essential for dendrite growth. Plays a key role in cell-cycle control and causes cell cycle arrest in G0/G1. The chain is SWI/SNF-related matrix-associated actin-dependent regulator of chromatin subfamily B member 1 (SMARCB1) from Homo sapiens (Human).